The following is a 993-amino-acid chain: NACHT, LRR and PYD domains-containing protein 14 (993 aa).

The 323-residue stretch at 81–403 (QTVVLQGAAG…FYLLRENLEE (323 aa)) folds into the NACHT domain. 87-94 (GAAGIGKT) serves as a coordination point for ATP. LRR repeat units lie at residues 636–657 (DLKE…LKCK), 660–680 (KLRV…QKLS), 688–708 (SLVF…KSLC), 717–738 (SLER…VLSS), 745–765 (RLTH…KLLS), 774–795 (TLQS…HLST), 802–822 (SLVH…KLLC), 831–852 (NLQE…DLAS), and 859–879 (NLWS…NILC).

Belongs to the NLRP family. In terms of tissue distribution, detected in adult ovary and testis. Detected in oocytes and in germ cell elements in seminiferous tubules in adult testis (at protein level).

The protein resides in the cytoplasm. Functionally, may be involved in inflammation and spermatogenesis. This chain is NACHT, LRR and PYD domains-containing protein 14 (Nlrp14), found in Mus musculus (Mouse).